The sequence spans 443 residues: Thymidine phosphorylase (443 aa).

The protein belongs to the thymidine/pyrimidine-nucleoside phosphorylase family. In terms of assembly, homodimer.

The catalysed reaction is thymidine + phosphate = 2-deoxy-alpha-D-ribose 1-phosphate + thymine. The protein operates within pyrimidine metabolism; dTMP biosynthesis via salvage pathway; dTMP from thymine: step 1/2. Its function is as follows. The enzymes which catalyze the reversible phosphorolysis of pyrimidine nucleosides are involved in the degradation of these compounds and in their utilization as carbon and energy sources, or in the rescue of pyrimidine bases for nucleotide synthesis. In Shewanella halifaxensis (strain HAW-EB4), this protein is Thymidine phosphorylase.